The chain runs to 61 residues: Bowman-Birk type proteinase inhibitor (61 aa).

7 cysteine pairs are disulfide-bonded: Cys-4–Cys-57, Cys-5–Cys-20, Cys-8–Cys-53, Cys-10–Cys-18, Cys-27–Cys-34, Cys-31–Cys-46, and Cys-36–Cys-44.

The protein belongs to the Bowman-Birk serine protease inhibitor family.

Strong inhibitor of trypsin with a 1:1 stoichiometry. Weaker inhibitor of chymotrypsin. The chain is Bowman-Birk type proteinase inhibitor from Erythrina variegata (Indian coral tree).